Here is a 310-residue protein sequence, read N- to C-terminus: Formyltetrahydrofolate deformylase (310 aa).

A disordered region spans residues 1–30; it reads MGKGSMTAHATPNEPDYPPPPGGPPPPADI. The span at 15–28 shows a compositional bias: pro residues; the sequence is PDYPPPPGGPPPPA. The ACT domain maps to 32-108; sequence RLLLRCHDRP…VADKFGIDYR (77 aa). Asp-255 is a catalytic residue.

The protein belongs to the PurU family.

It carries out the reaction (6R)-10-formyltetrahydrofolate + H2O = (6S)-5,6,7,8-tetrahydrofolate + formate + H(+). Its pathway is purine metabolism; IMP biosynthesis via de novo pathway; formate from 10-formyl-5,6,7,8-tetrahydrofolate: step 1/1. Catalyzes the hydrolysis of 10-formyltetrahydrofolate (formyl-FH4) to formate and tetrahydrofolate (FH4). In Mycobacterium bovis (strain ATCC BAA-935 / AF2122/97), this protein is Formyltetrahydrofolate deformylase.